Consider the following 390-residue polypeptide: Digeranylgeranylglycerophospholipid reductase (390 aa).

The FAD site is built by Ala18, Glu37, Cys48, Ala49, Ala51, Arg98, Val122, Asp278, Gly290, and Ile291. Val368 is a binding site for a 2,3-bis-O-(geranylgeranyl)-sn-glycerol 1-phospholipid.

This sequence belongs to the geranylgeranyl reductase family. DGGGPL reductase subfamily. FAD is required as a cofactor.

It catalyses the reaction a 2,3-bis-O-phytanyl-sn-glycerol 1-phospholipid + 8 A = a 2,3-bis-O-(geranylgeranyl)-sn-glycerol 1-phospholipid + 8 AH2. The catalysed reaction is 2,3-bis-O-(phytanyl)-sn-glycerol 1-phosphate + 8 A = 2,3-bis-O-(geranylgeranyl)-sn-glycerol 1-phosphate + 8 AH2. It carries out the reaction CDP-2,3-bis-O-(geranylgeranyl)-sn-glycerol + 8 AH2 = CDP-2,3-bis-O-(phytanyl)-sn-glycerol + 8 A. The enzyme catalyses archaetidylserine + 8 AH2 = 2,3-bis-O-phytanyl-sn-glycero-3-phospho-L-serine + 8 A. Its pathway is membrane lipid metabolism; glycerophospholipid metabolism. In terms of biological role, is involved in the reduction of 2,3-digeranylgeranylglycerophospholipids (unsaturated archaeols) into 2,3-diphytanylglycerophospholipids (saturated archaeols) in the biosynthesis of archaeal membrane lipids. Catalyzes the formation of archaetidic acid (2,3-di-O-phytanyl-sn-glyceryl phosphate) from 2,3-di-O-geranylgeranylglyceryl phosphate (DGGGP) via the hydrogenation of each double bond of the isoprenoid chains. Is also probably able to reduce double bonds of geranyl groups in CDP-2,3-bis-O-(geranylgeranyl)-sn-glycerol and archaetidylserine, thus acting at various stages in the biosynthesis of archaeal membrane lipids. The sequence is that of Digeranylgeranylglycerophospholipid reductase from Methanococcus maripaludis (strain C7 / ATCC BAA-1331).